The primary structure comprises 1528 residues: Mitogen-activated protein kinase kinae kinase MCK1 (1528 aa).

Positions 1–11 (MYPGSSQSRPY) are enriched in low complexity. Disordered regions lie at residues 1–84 (MYPG…PAPR), 109–208 (ATAP…VPGI), 303–418 (VHAR…NNVR), 449–481 (INGR…KLPF), 607–652 (VKPP…EARL), 695–731 (GKPV…APSA), 746–786 (VQGS…SQPM), 811–929 (SANN…SDDG), 943–1012 (KKAK…EDGK), and 1086–1191 (ATPL…ALLR). Residues 12 to 21 (QVPPPPPMSP) show a composition bias toward pro residues. The segment covering 22 to 31 (PLSQMHQQMS) has biased composition (low complexity). The segment covering 53 to 64 (APPPPPPGPPPA) has biased composition (pro residues). Low complexity predominate over residues 157 to 173 (SSQTWQTTSSSSTNTAS). Polar residues-rich tracts occupy residues 174 to 183 (VNDNVQSNAP), 191 to 205 (NNSA…SSNV), and 318 to 327 (HGRQGSINSR). Basic and acidic residues predominate over residues 328–337 (GNDKGTHDGS). Over residues 338-363 (DSPNTPSSQSRSTTIPTFPDGSSFSN) the composition is skewed to polar residues. Residues 396-408 (SSTPKSSTLSVSP) show a composition bias toward low complexity. Residues 409–418 (HSSRFGNNVR) show a composition bias toward polar residues. Composition is skewed to polar residues over residues 613–622 (SQQSTWSAGD) and 630–641 (GTSSSMSRQQNT). 2 stretches are compositionally biased toward basic and acidic residues: residues 642 to 652 (LKDDQSEEARL) and 698 to 714 (VDFD…KNTD). The span at 846–860 (RSQTAGDLSPISQMP) shows a compositional bias: polar residues. Acidic residues predominate over residues 917-928 (QSDDDSGDDSDD). Residues 977 to 986 (VSFNSPQSAR) show a composition bias toward polar residues. The span at 1001 to 1012 (PKSDMWDSEDGK) shows a compositional bias: basic and acidic residues. Polar residues predominate over residues 1086 to 1111 (ATPLNSLPPSRVQSMYNESDTLGSDE). Residues 1142–1152 (SIREKARGAHE) show a composition bias toward basic and acidic residues. Residues 1158–1188 (TQTSMAAPQGLSRSGGTPATETQPTQNNSSA) show a composition bias toward polar residues. One can recognise a Protein kinase domain in the interval 1238–1507 (WFKGQLIGKG…NKLLSQHPFC (270 aa)). Residues 1244-1252 (IGKGTYGRV) and Lys-1267 each bind ATP.

The protein belongs to the protein kinase superfamily. STE Ser/Thr protein kinase family. MAP kinase kinase kinase subfamily. In terms of assembly, interacts with the adapter protein MST50 and MIP11.

The enzyme catalyses L-seryl-[protein] + ATP = O-phospho-L-seryl-[protein] + ADP + H(+). It catalyses the reaction L-threonyl-[protein] + ATP = O-phospho-L-threonyl-[protein] + ADP + H(+). Mitogen-activated protein kinase kinase kinase; part of the MCK1-MKK2-MPS1 MAP kinase (MAPK) signal transduction cascade that is essential for appressorium formation, penetration and invasive growth. Beside its role in pathogenesis, the MPS1 cascade is active in conidiation and cellular stress responses. Targets downstream of the the MPS1-MAPK pathway include transcription factors MIG1 and SWI6, as well as GSK1 and MPG1. In Pyricularia oryzae (strain 70-15 / ATCC MYA-4617 / FGSC 8958) (Rice blast fungus), this protein is Mitogen-activated protein kinase kinae kinase MCK1.